A 128-amino-acid chain; its full sequence is Aspartate 1-decarboxylase (128 aa).

Residue serine 25 is the Schiff-base intermediate with substrate; via pyruvic acid of the active site. A Pyruvic acid (Ser) modification is found at serine 25. Residue threonine 57 coordinates substrate. Tyrosine 58 acts as the Proton donor in catalysis. 73–75 (GSA) serves as a coordination point for substrate.

Belongs to the PanD family. Heterooctamer of four alpha and four beta subunits. Pyruvate is required as a cofactor. Is synthesized initially as an inactive proenzyme, which is activated by self-cleavage at a specific serine bond to produce a beta-subunit with a hydroxyl group at its C-terminus and an alpha-subunit with a pyruvoyl group at its N-terminus.

Its subcellular location is the cytoplasm. The catalysed reaction is L-aspartate + H(+) = beta-alanine + CO2. The protein operates within cofactor biosynthesis; (R)-pantothenate biosynthesis; beta-alanine from L-aspartate: step 1/1. Functionally, catalyzes the pyruvoyl-dependent decarboxylation of aspartate to produce beta-alanine. The chain is Aspartate 1-decarboxylase from Burkholderia pseudomallei (strain 668).